We begin with the raw amino-acid sequence, 216 residues long: Kynurenine formamidase (216 aa).

Tryptophan 25 provides a ligand contact to substrate. Positions 55, 59, and 61 each coordinate Zn(2+). Histidine 65 functions as the Proton donor/acceptor in the catalytic mechanism. Residues histidine 167 and glutamate 179 each contribute to the Zn(2+) site.

Belongs to the Cyclase 1 superfamily. KynB family. As to quaternary structure, homodimer. Zn(2+) serves as cofactor.

The catalysed reaction is N-formyl-L-kynurenine + H2O = L-kynurenine + formate + H(+). The protein operates within amino-acid degradation; L-tryptophan degradation via kynurenine pathway; L-kynurenine from L-tryptophan: step 2/2. In terms of biological role, catalyzes the hydrolysis of N-formyl-L-kynurenine to L-kynurenine, the second step in the kynurenine pathway of tryptophan degradation. The polypeptide is Kynurenine formamidase (Cupriavidus taiwanensis (strain DSM 17343 / BCRC 17206 / CCUG 44338 / CIP 107171 / LMG 19424 / R1) (Ralstonia taiwanensis (strain LMG 19424))).